We begin with the raw amino-acid sequence, 179 residues long: MVVEVLRLGHRGDRDKRISTHVALTARALGADKIIFTTEDEHVENSVKKVVESWGGNFEFVVEKHWRKYIREFKKRGIVVHLTMYGANINEIMPEIREISRDKDILVIVGAEKVPKEVYELADYNVSVGNQPHSEVAALAIFLDRLFEGKTLYRDFEDAKIKIVPSKDGKVVIREKQNK.

Residues L82, 110-114 (GAEKV), and 128-135 (VGNQPHSE) contribute to the S-adenosyl-L-methionine site.

This sequence belongs to the aTrm56 family. Homodimer.

It localises to the cytoplasm. It carries out the reaction cytidine(56) in tRNA + S-adenosyl-L-methionine = 2'-O-methylcytidine(56) in tRNA + S-adenosyl-L-homocysteine + H(+). Its function is as follows. Specifically catalyzes the AdoMet-dependent 2'-O-ribose methylation of cytidine at position 56 in tRNAs. In Methanocaldococcus jannaschii (strain ATCC 43067 / DSM 2661 / JAL-1 / JCM 10045 / NBRC 100440) (Methanococcus jannaschii), this protein is tRNA (cytidine(56)-2'-O)-methyltransferase.